We begin with the raw amino-acid sequence, 292 residues long: Probable deoxyhypusine synthase (292 aa).

Residue K267 is the Nucleophile of the active site.

This sequence belongs to the deoxyhypusine synthase family. It depends on NAD(+) as a cofactor.

The enzyme catalyses [eIF5A protein]-L-lysine + spermidine = [eIF5A protein]-deoxyhypusine + propane-1,3-diamine. The protein operates within protein modification; eIF5A hypusination. Functionally, catalyzes the NAD-dependent oxidative cleavage of spermidine and the subsequent transfer of the butylamine moiety of spermidine to the epsilon-amino group of a specific lysine residue of the eIF-5A precursor protein to form the intermediate deoxyhypusine residue. This is Probable deoxyhypusine synthase (dys) from Pyrobaculum aerophilum (strain ATCC 51768 / DSM 7523 / JCM 9630 / CIP 104966 / NBRC 100827 / IM2).